A 291-amino-acid polypeptide reads, in one-letter code: Phosphatidylglycerol--prolipoprotein diacylglyceryl transferase (291 aa).

A run of 7 helical transmembrane segments spans residues 21–41 (VALH…MWLA), 60–80 (LLYA…VLFY), 96–116 (WDGG…MIIF), 130–150 (FIAP…FING), 198–218 (SQLY…NLFI), 225–245 (GAVS…VEFF), and 260–280 (ISMG…MMVW). Arg143 contacts a 1,2-diacyl-sn-glycero-3-phospho-(1'-sn-glycerol).

The protein belongs to the Lgt family.

Its subcellular location is the cell inner membrane. It catalyses the reaction L-cysteinyl-[prolipoprotein] + a 1,2-diacyl-sn-glycero-3-phospho-(1'-sn-glycerol) = an S-1,2-diacyl-sn-glyceryl-L-cysteinyl-[prolipoprotein] + sn-glycerol 1-phosphate + H(+). It participates in protein modification; lipoprotein biosynthesis (diacylglyceryl transfer). Functionally, catalyzes the transfer of the diacylglyceryl group from phosphatidylglycerol to the sulfhydryl group of the N-terminal cysteine of a prolipoprotein, the first step in the formation of mature lipoproteins. This chain is Phosphatidylglycerol--prolipoprotein diacylglyceryl transferase, found in Salmonella newport (strain SL254).